The sequence spans 407 residues: Aminoacylase-1 (407 aa).

Ala-2 is modified (N-acetylalanine). Residue His-80 participates in Zn(2+) binding. The active site involves Asp-82. Asp-113 contributes to the Zn(2+) binding site. Glu-147 (proton acceptor) is an active-site residue. Zn(2+)-binding residues include Glu-148, Glu-175, and His-372.

Belongs to the peptidase M20A family. Homodimer. Interacts with SPHK1. Requires Zn(2+) as cofactor.

Its subcellular location is the cytoplasm. It carries out the reaction an N-acyl-L-amino acid + H2O = an L-alpha-amino acid + a carboxylate. The enzyme catalyses N-acetyl-L-methionine + H2O = L-methionine + acetate. It catalyses the reaction N-acetyl-L-glutamine + H2O = L-glutamine + acetate. Catalyzes the hydrolysis of N-acetylated amino acids to acetate and free amino acids. In Sus scrofa (Pig), this protein is Aminoacylase-1 (ACY1).